The following is a 122-amino-acid chain: uncharacterized protein (122 aa).

It localises to the plastid. This is an uncharacterized protein from Euglena longa (Euglenophycean alga).